Reading from the N-terminus, the 157-residue chain is Transcriptional repressor NrdR (157 aa).

The segment at 3 to 34 is a zinc-finger region; it reads CPFCNAEDTKVIDSRLVEEGTQVRRRRECLKC. Residues 49 to 139 form the ATP-cone domain; that stretch reads PRIIKRDGRR…VYRSFQDINA (91 aa).

It belongs to the NrdR family. The cofactor is Zn(2+).

Its function is as follows. Negatively regulates transcription of bacterial ribonucleotide reductase nrd genes and operons by binding to NrdR-boxes. This is Transcriptional repressor NrdR from Coxiella burnetii (strain CbuK_Q154) (Coxiella burnetii (strain Q154)).